A 121-amino-acid chain; its full sequence is Non-structural protein 8 (121 aa).

The signal sequence occupies residues 1-15; that stretch reads MKLLIVFGLLTSVYC. An SARS ORF8 Ig-like domain is found at 19 to 121; it reads ECSIQECCEN…HDVRVVLDFI (103 aa). 3 cysteine pairs are disulfide-bonded: Cys-25/Cys-90, Cys-37/Cys-102, and Cys-61/Cys-83.

The protein is Non-structural protein 8 of Rhinolophus macrotis (Big-eared horseshoe bat).